The sequence spans 436 residues: F-box protein SKIP16 (436 aa).

Residues 75 to 111 (RESFRMYPWNLVKRVRLCWDNLKQWLTLNFPEAKATL) enclose the F-box; degenerate domain. Positions 295-436 (VSVTNGVQVR…FPLELPDYIF (142 aa)) constitute an ApaG domain.

In terms of assembly, part of a SCF (ASK-cullin-F-box) protein ligase complex. Interacts with SKP1A/ASK1, SKP1B/ASK2, ASK4, ASK11 and ASK13.

Its pathway is protein modification; protein ubiquitination. Its function is as follows. Component of SCF(ASK-cullin-F-box) E3 ubiquitin ligase complexes, which may mediate the ubiquitination and subsequent proteasomal degradation of target proteins. This chain is F-box protein SKIP16 (SKIP16), found in Arabidopsis thaliana (Mouse-ear cress).